The primary structure comprises 444 residues: Ribulose bisphosphate carboxylase large chain (444 aa).

An N6,N6,N6-trimethyllysine modification is found at lysine 7. Substrate-binding residues include asparagine 116 and threonine 166. Lysine 168 (proton acceptor) is an active-site residue. A substrate-binding site is contributed by lysine 170. Positions 194, 196, and 197 each coordinate Mg(2+). Lysine 194 bears the N6-carboxylysine mark. The active-site Proton acceptor is the histidine 287. Substrate is bound by residues arginine 288, histidine 320, and serine 372.

This sequence belongs to the RuBisCO large chain family. Type I subfamily. Heterohexadecamer of 8 large chains and 8 small chains; disulfide-linked. The disulfide link is formed within the large subunit homodimers. Requires Mg(2+) as cofactor. The disulfide bond which can form in the large chain dimeric partners within the hexadecamer appears to be associated with oxidative stress and protein turnover.

The protein resides in the plastid. The protein localises to the chloroplast. The catalysed reaction is 2 (2R)-3-phosphoglycerate + 2 H(+) = D-ribulose 1,5-bisphosphate + CO2 + H2O. It carries out the reaction D-ribulose 1,5-bisphosphate + O2 = 2-phosphoglycolate + (2R)-3-phosphoglycerate + 2 H(+). Functionally, ruBisCO catalyzes two reactions: the carboxylation of D-ribulose 1,5-bisphosphate, the primary event in carbon dioxide fixation, as well as the oxidative fragmentation of the pentose substrate in the photorespiration process. Both reactions occur simultaneously and in competition at the same active site. This Watsonia angusta protein is Ribulose bisphosphate carboxylase large chain.